The chain runs to 741 residues: MGKPPGARNPAEAEADGDDAVFLELSRELKEEGTRLFNRRDFEGAAFKYDKAVQLLPAGRRVEAAHLRASIAHCYMRMSPAEFHHAIHECNLALEAVPRYSRALLRRAACFEALGRPDLAWGDIRTVLRWEPGNRAARQISDRVRTALEDKGISVALDVLPEDENEIASAKGEERKKSRNKRFDSVAGGREGENGIALLESASTEKQAGPRQTNGTGNHQDHTEDSESNGLEKLEQSTETGEKDMGKKRGAHAAGKKPRCGESKQQKHSAVNHCQDNIGAKEEVMKDVKLVFGEDIRCAQMPANCSLPQLREIVQNKFPSLKAFLIKYKDKEEDLVTITLSEELSWASNLAVSQVPIRFYVVEVNHVQELGVDGVRRRPSFATLERNRDIMLDNGTIGHDVEHKHYADDWMVQFAQIFKNHVGFSSDAYLDLHDLGLRLHYEAMEDTIQREEAQEIFEVAESKFKEMAALALFNCGNVHMSRARRRPCLAEDPLQEFILEKVNVSYDWACTEYAKAGAMFEEAVKTKSDFFEGLIALGQQKFEQAKLSWYYALACKINMETEVLELFNHAEDNMEKGMDMWERMETLRLKGLSKPSKEKVVLEKMVLEGFVKDISADEAFEQASSIRSHINILWGTILYERSVVEFNLGLPSWEESLTVAMEKFKIGGASQADINVIVKNHCANETTQEGLSFKVEEIVQAWSEMHDAKNWRSGPLYFRLQPVFRRRAPKLHHILEHMHYA.

TPR repeat units follow at residues 26–59, 65–100, and 102–134; these read SREL…LPAG, AHLR…VPRY, and RALL…EPGN. The disordered stretch occupies residues 168-270; the sequence is ASAKGEERKK…GESKQQKHSA (103 aa). Over residues 171 to 184 the composition is skewed to basic and acidic residues; it reads KGEERKKSRNKRFD. Over residues 201-218 the composition is skewed to polar residues; the sequence is SASTEKQAGPRQTNGTGN. The span at 219–247 shows a compositional bias: basic and acidic residues; that stretch reads HQDHTEDSESNGLEKLEQSTETGEKDMGK. The span at 248 to 258 shows a compositional bias: basic residues; that stretch reads KRGAHAAGKKP. One can recognise a PB1 domain in the interval 285 to 364; sequence MKDVKLVFGE…VPIRFYVVEV (80 aa). TPR repeat units lie at residues 496 to 530, 532 to 557, 558 to 591, and 628 to 663; these read EFIL…KSDF, EGLI…ACKI, NMET…RLKG, and SHIN…AMEK.

In terms of assembly, interacts (via C-terminus) with O1. Interacts (via C-terminus) with OP10 (via N-terminus).

In terms of biological role, acts as a co-chaperone for HSP90 and is required for proper folding of the myosin motor domain. The protein is HSP-interacting protein of Zea mays (Maize).